We begin with the raw amino-acid sequence, 336 residues long: Ornithine carbamoyltransferase, catabolic (336 aa).

Carbamoyl phosphate contacts are provided by residues 57 to 60 (STRT), Q84, R108, and 135 to 138 (HPTQ). L-ornithine is bound by residues N168, D232, and 236–237 (SM). Carbamoyl phosphate-binding positions include 274–275 (CL) and R321.

It belongs to the aspartate/ornithine carbamoyltransferase superfamily. OTCase family.

The protein resides in the cytoplasm. The catalysed reaction is carbamoyl phosphate + L-ornithine = L-citrulline + phosphate + H(+). It participates in amino-acid degradation; L-arginine degradation via ADI pathway; carbamoyl phosphate from L-arginine: step 2/2. Functionally, reversibly catalyzes the transfer of the carbamoyl group from carbamoyl phosphate (CP) to the N(epsilon) atom of ornithine (ORN) to produce L-citrulline. This is Ornithine carbamoyltransferase, catabolic (arcB) from Pseudomonas putida (strain ATCC 47054 / DSM 6125 / CFBP 8728 / NCIMB 11950 / KT2440).